A 379-amino-acid polypeptide reads, in one-letter code: Succinyl-diaminopimelate desuccinylase (379 aa).

His-70 contacts Zn(2+). Asp-72 is an active-site residue. Asp-103 is a Zn(2+) binding site. Residue Glu-137 is the Proton acceptor of the active site. Residues Glu-138, Glu-166, and His-352 each contribute to the Zn(2+) site.

Belongs to the peptidase M20A family. DapE subfamily. As to quaternary structure, homodimer. Zn(2+) is required as a cofactor. It depends on Co(2+) as a cofactor.

It catalyses the reaction N-succinyl-(2S,6S)-2,6-diaminopimelate + H2O = (2S,6S)-2,6-diaminopimelate + succinate. It participates in amino-acid biosynthesis; L-lysine biosynthesis via DAP pathway; LL-2,6-diaminopimelate from (S)-tetrahydrodipicolinate (succinylase route): step 3/3. Catalyzes the hydrolysis of N-succinyl-L,L-diaminopimelic acid (SDAP), forming succinate and LL-2,6-diaminopimelate (DAP), an intermediate involved in the bacterial biosynthesis of lysine and meso-diaminopimelic acid, an essential component of bacterial cell walls. This is Succinyl-diaminopimelate desuccinylase from Burkholderia multivorans (strain ATCC 17616 / 249).